The chain runs to 141 residues: Large ribosomal subunit protein uL11 (141 aa).

It belongs to the universal ribosomal protein uL11 family. In terms of assembly, part of the ribosomal stalk of the 50S ribosomal subunit. Interacts with L10 and the large rRNA to form the base of the stalk. L10 forms an elongated spine to which L12 dimers bind in a sequential fashion forming a multimeric L10(L12)X complex. In terms of processing, one or more lysine residues are methylated.

Its function is as follows. Forms part of the ribosomal stalk which helps the ribosome interact with GTP-bound translation factors. The protein is Large ribosomal subunit protein uL11 of Acaryochloris marina (strain MBIC 11017).